Consider the following 345-residue polypeptide: Biotin synthase (345 aa).

Positions 60 to 287 (NQVQLSTLLS…RTMVRLSAGR (228 aa)) constitute a Radical SAM core domain. Residues C75, C79, and C82 each coordinate [4Fe-4S] cluster. [2Fe-2S] cluster contacts are provided by C119, C150, C210, and R282.

Belongs to the radical SAM superfamily. Biotin synthase family. As to quaternary structure, homodimer. The cofactor is [4Fe-4S] cluster. [2Fe-2S] cluster serves as cofactor.

The enzyme catalyses (4R,5S)-dethiobiotin + (sulfur carrier)-SH + 2 reduced [2Fe-2S]-[ferredoxin] + 2 S-adenosyl-L-methionine = (sulfur carrier)-H + biotin + 2 5'-deoxyadenosine + 2 L-methionine + 2 oxidized [2Fe-2S]-[ferredoxin]. It functions in the pathway cofactor biosynthesis; biotin biosynthesis; biotin from 7,8-diaminononanoate: step 2/2. In terms of biological role, catalyzes the conversion of dethiobiotin (DTB) to biotin by the insertion of a sulfur atom into dethiobiotin via a radical-based mechanism. This is Biotin synthase from Polaromonas naphthalenivorans (strain CJ2).